Here is a 491-residue protein sequence, read N- to C-terminus: Cobyric acid synthase (491 aa).

The region spanning 250–437 (RLRVVVPVLP…LHGIFDHPAA (188 aa)) is the GATase cobBQ-type domain. Residue Cys331 is the Nucleophile of the active site. Residue His429 is part of the active site.

This sequence belongs to the CobB/CobQ family. CobQ subfamily.

It participates in cofactor biosynthesis; adenosylcobalamin biosynthesis. Catalyzes amidations at positions B, D, E, and G on adenosylcobyrinic A,C-diamide. NH(2) groups are provided by glutamine, and one molecule of ATP is hydrogenolyzed for each amidation. The protein is Cobyric acid synthase of Xanthomonas campestris pv. campestris (strain B100).